Reading from the N-terminus, the 207-residue chain is Small ribosomal subunit protein bS6c (207 aa).

The transit peptide at 1-59 directs the protein to the chloroplast; the sequence is MASSLCVSNSTICPLPNVSSQPLLSFSHSLRPFISKSKPMCASIQKRDGSQFVVKSQAL. The interval 69-99 is disordered; sequence GFGSDDDPTSPSGSGVSTALEDKPEPQCPPG. A compositionally biased stretch (low complexity) spans 77–86; the sequence is TSPSGSGVST.

Belongs to the bacterial ribosomal protein bS6 family. As to quaternary structure, part of the 30S ribosomal subunit.

It is found in the plastid. Its subcellular location is the chloroplast. Functionally, binds together with bS18 to 16S ribosomal RNA. The chain is Small ribosomal subunit protein bS6c (RPS6) from Arabidopsis thaliana (Mouse-ear cress).